The sequence spans 796 residues: Transcription factor kayak (796 aa).

Disordered regions lie at residues 109-132 (AYQQ…SNTS), 315-341 (VVNN…SNTV), 374-429 (FNCG…GSNG), and 442-490 (VGSA…RNKL). The segment covering 402-429 (TTDTSSAATDSTSYQNGGHMFGNNGSNG) has biased composition (low complexity). Over residues 447–457 (RGTSSTSNNAT) the composition is skewed to polar residues. Positions 478–541 (EEKRRVRRER…HQLNFVLEAH (64 aa)) constitute a bZIP domain. The interval 480 to 499 (KRRVRRERNKLAAARCRKRR) is basic motif. Residues 506–534 (LSEEVDGLLKKNEDLKKEIEILTNTRHQL) are leucine-zipper. A disordered region spans residues 569–601 (SSGSNGSHHHNSNSNNSNNNNSNNNNNSNSNDS). Ser-621 is modified (phosphoserine). 2 disordered regions span residues 642–661 (PHDA…PPAA) and 774–796 (SSQN…LVSL).

Belongs to the bZIP family. Fos subfamily. In terms of assembly, homodimer. Heterodimer with Jra. The kay-Jra heterodimer binds more stably to the AP-1 site than either of the two proteins alone.

The protein localises to the nucleus. Developmentally regulated transcription factor AP-1 binds and recognizes the enhancer DNA sequence: 5'-TGA[CG]TCA-3'. May play a role in the function or determination of a particular subset of cells in the developing embryo. It is able to carry out its function either independently of or in conjunction with Jra. The polypeptide is Transcription factor kayak (Drosophila grimshawi (Hawaiian fruit fly)).